The primary structure comprises 201 residues: DNA polymerase epsilon subunit C (201 aa).

Disordered stretches follow at residues Lys-102–Arg-165 and Ser-178–Pro-201. Residues Val-117 to Glu-144 are compositionally biased toward acidic residues. Basic and acidic residues-rich tracts occupy residues Pro-145 to Thr-164 and Val-182 to Pro-201. Ser-186, Ser-188, and Ser-189 each carry phosphoserine.

As to quaternary structure, DNA polymerase epsilon is a heterotetramer consisting of POL2, DPB2, DPB3 and DPB4.

Its subcellular location is the nucleus. In terms of biological role, as accessory component of the DNA polymerase epsilon (DNA polymerase II) participates in chromosomal DNA replication. It is required during synthesis of the leading and lagging DNA strands at the replication fork and binds at/or near replication origins and moves along DNA with the replication fork. It has 3'-5' proofreading exonuclease activity that correct errors arising during DNA replication. It is also involved in DNA synthesis during DNA repair. This Saccharomyces cerevisiae (strain ATCC 204508 / S288c) (Baker's yeast) protein is DNA polymerase epsilon subunit C (DPB3).